The following is a 368-amino-acid chain: Anti-sigma-X factor RsiX (368 aa).

The span at 73-87 shows a compositional bias: polar residues; that stretch reads QPQQKEASQENAVTK. The tract at residues 73–101 is disordered; it reads QPQQKEASQENAVTKTETEDSPKAASSLD.

It localises to the cell membrane. In terms of biological role, the anti-sigma factor for extracytoplasmic function (ECF) sigma factor SigX, inhibits SigX activity and stabilizes it. This is Anti-sigma-X factor RsiX (rsiX) from Bacillus subtilis (strain 168).